A 69-amino-acid chain; its full sequence is KKDDYPVDTAKRNCKFPCNVIDKEGYCDNLCKGRKAEKGYCYRLNASCYCYGLPDDSPTKKSGRCNPNL.

Residues 2-66 (KDDYPVDTAK…SPTKKSGRCN (65 aa)) enclose the LCN-type CS-alpha/beta domain. 4 cysteine pairs are disulfide-bonded: C14–C65, C18–C41, C27–C48, and C31–C50.

Belongs to the long (4 C-C) scorpion toxin superfamily. Sodium channel inhibitor family. Expressed by the venom gland.

It is found in the secreted. In terms of biological role, inhibits voltage-gated sodium channels (Nav). This toxin shows insect lethality against crickets. This is Toxin Tma3 from Tityus macrochirus (Scorpion).